A 93-amino-acid polypeptide reads, in one-letter code: uncharacterized protein (93 aa).

To B.subtilis YdcN C-terminal region.

This is an uncharacterized protein from Methanocaldococcus jannaschii (strain ATCC 43067 / DSM 2661 / JAL-1 / JCM 10045 / NBRC 100440) (Methanococcus jannaschii).